The primary structure comprises 685 residues: Delta-like protein 4 (685 aa).

A signal peptide spans 1-26 (MAAASRSASGWALLLLVALWQQRAAG). Residues 27-529 (SGVFQLQLQE…PVGLPPSFPW (503 aa)) are Extracellular-facing. Intrachain disulfides connect cysteine 50–cysteine 54 and cysteine 61–cysteine 74. N-linked (GlcNAc...) asparagine glycosylation is found at asparagine 108 and asparagine 183. A DSL domain is found at 173–217 (VICSDNYYGDNCSRLCKKRNDHFGHYVCQPDGNLSCLPGWTGEYC). Residues cysteine 175 and cysteine 184 are joined by a disulfide bond. 2 interaction with Notch1 regions span residues 185–187 (SRL) and 191–195 (RNDHF). Cysteines 188 and 200 form a disulfide. Asparagine 205 carries N-linked (GlcNAc...) asparagine glycosylation. 25 disulfide bridges follow: cysteine 208–cysteine 217, cysteine 222–cysteine 233, cysteine 226–cysteine 239, cysteine 241–cysteine 250, cysteine 253–cysteine 264, cysteine 259–cysteine 270, cysteine 272–cysteine 281, cysteine 288–cysteine 300, cysteine 294–cysteine 310, cysteine 312–cysteine 321, cysteine 328–cysteine 339, cysteine 333–cysteine 348, cysteine 350–cysteine 359, cysteine 366–cysteine 377, cysteine 371–cysteine 388, cysteine 390–cysteine 399, cysteine 406–cysteine 417, cysteine 411–cysteine 426, cysteine 428–cysteine 437, cysteine 444–cysteine 455, cysteine 449–cysteine 464, cysteine 466–cysteine 475, cysteine 484–cysteine 495, cysteine 489–cysteine 506, and cysteine 508–cysteine 517. EGF-like domains lie at 218 to 251 (QQPI…RLCN), 252 to 282 (ECIP…LFCD), 284 to 322 (DLNY…VDCE), 324 to 360 (ELSE…LHCE), 362 to 400 (STLS…SNCE), 402 to 438 (KVDR…TYCE), 440 to 476 (HVSD…RRCE), and 480 to 518 (SIDA…SRCE). N-linked (GlcNAc...) asparagine glycosylation occurs at asparagine 393. The helical transmembrane segment at 530–550 (VAVSLGVGLAVLLVLLGMVAV) threads the bilayer. The Cytoplasmic portion of the chain corresponds to 551-685 (AVRQLRLRRP…RNECVIATEV (135 aa)).

As to quaternary structure, interacts with NOTCH4. Interacts (via N-terminal DSL and MNNL domains) with NOTCH1 (via EGF-like domains). As to expression, expressed in vascular endothelium.

The protein localises to the cell membrane. Involved in the Notch signaling pathway as Notch ligand. Activates NOTCH1 and NOTCH4. Involved in angiogenesis; negatively regulates endothelial cell proliferation and migration and angiogenic sprouting. Essential for retinal progenitor proliferation. Required for suppressing rod fates in late retinal progenitors as well as for proper generation of other retinal cell types. During spinal cord neurogenesis, inhibits V2a interneuron fate. This Homo sapiens (Human) protein is Delta-like protein 4 (DLL4).